Reading from the N-terminus, the 290-residue chain is Phosphatidylglycerol--prolipoprotein diacylglyceryl transferase (290 aa).

The next 7 membrane-spanning stretches (helical) occupy residues 21–41, 60–80, 96–116, 124–144, 198–218, 225–245, and 260–280; these read VALH…MWLA, LLYA…VLFY, WDGG…MVIF, FFQV…AGRL, SQLY…NLFI, GSVS…VEFF, and ISMG…MMIW. Residue Arg143 coordinates a 1,2-diacyl-sn-glycero-3-phospho-(1'-sn-glycerol).

Belongs to the Lgt family.

It is found in the cell inner membrane. The catalysed reaction is L-cysteinyl-[prolipoprotein] + a 1,2-diacyl-sn-glycero-3-phospho-(1'-sn-glycerol) = an S-1,2-diacyl-sn-glyceryl-L-cysteinyl-[prolipoprotein] + sn-glycerol 1-phosphate + H(+). The protein operates within protein modification; lipoprotein biosynthesis (diacylglyceryl transfer). Catalyzes the transfer of the diacylglyceryl group from phosphatidylglycerol to the sulfhydryl group of the N-terminal cysteine of a prolipoprotein, the first step in the formation of mature lipoproteins. This chain is Phosphatidylglycerol--prolipoprotein diacylglyceryl transferase, found in Enterobacter sp. (strain 638).